The chain runs to 466 residues: Glutamate decarboxylase (466 aa).

Lys-277 is subject to N6-(pyridoxal phosphate)lysine.

It belongs to the group II decarboxylase family. The cofactor is pyridoxal 5'-phosphate.

It catalyses the reaction L-glutamate + H(+) = 4-aminobutanoate + CO2. In terms of biological role, converts internalized glutamate to GABA and increases the internal pH. Involved in glutamate-dependent acid resistance. In Lactococcus lactis subsp. lactis (strain IL1403) (Streptococcus lactis), this protein is Glutamate decarboxylase (gadB).